Reading from the N-terminus, the 686-residue chain is Gamma-aminobutyric acid receptor alpha-like (686 aa).

The signal sequence occupies residues 1-58 (MCTMPATRDASGSGDASTDLIAARSLSSHQGQRSNLRIFKLLISCCLLMLCIYPNAWP). Residues 97-393 (SSWLTQSNNH…NFHLQRHMGN (297 aa)) lie on the Extracellular side of the membrane. A glycan (N-linked (GlcNAc...) asparagine) is linked at N108. C233 and C247 are oxidised to a cystine. A glycan (N-linked (GlcNAc...) asparagine) is linked at N292. 3 consecutive transmembrane segments (helical) span residues 394-414 (FLIQ…VSFW), 424-441 (VSLG…GLEA), and 456-476 (FFVF…AVVH). The Cytoplasmic segment spans residues 477-650 (YYTKYGSGEC…YNSVSKIDRA (174 aa)). Residues 570 to 641 (KPPRADSDED…RRKGKRTPQY (72 aa)) are disordered. The span at 586–596 (QLRANEAPTTS) shows a compositional bias: polar residues. The span at 597-609 (AAAAAAQAAAQAA) shows a compositional bias: low complexity. Residues 651–671 (SRIVFPLLFILINVFYWYGYL) form a helical membrane-spanning segment.

This sequence belongs to the ligand-gated ion channel (TC 1.A.9) family. Gamma-aminobutyric acid receptor (TC 1.A.9.5) subfamily. Generally pentameric. There are five types of GABA(A) receptor chains: alpha, beta, gamma, delta, and rho. Interacts with Lcch3 (beta chain).

The protein resides in the postsynaptic cell membrane. It localises to the cell membrane. Functionally, GABA, an inhibitory neurotransmitter, mediates neuronal inhibition by binding to the GABA receptor and opening an integral chloride channel. May combine with the ligand-gated ion channel subunit Lcch3 to form cation-selective GABA-gated ion channels. This chain is Gamma-aminobutyric acid receptor alpha-like (Grd), found in Drosophila melanogaster (Fruit fly).